A 937-amino-acid chain; its full sequence is Putative diacylglycerol kinase K06A1.6 (937 aa).

Disordered stretches follow at residues proline 44–alanine 69 and serine 106–asparagine 145. Low complexity predominate over residues valine 116–aspartate 129. Residues glycine 414–proline 551 form the DAGKc domain.

Belongs to the eukaryotic diacylglycerol kinase family.

The catalysed reaction is a 1,2-diacyl-sn-glycerol + ATP = a 1,2-diacyl-sn-glycero-3-phosphate + ADP + H(+). In Caenorhabditis elegans, this protein is Putative diacylglycerol kinase K06A1.6 (dgk-5).